We begin with the raw amino-acid sequence, 246 residues long: Peroxisomal membrane protein 11A (246 aa).

The Cytoplasmic portion of the chain corresponds to 1–93 (MDAFIRVANQ…LCLTLANLNR (93 aa)). A helical transmembrane segment spans residues 94-114 (VVYYICDTVLWAKSVGLTSGI). The Lumenal portion of the chain corresponds to 115–217 (NREKWQMRAA…LNQLGIYKSN (103 aa)). The chain crosses the membrane as a helical span at residues 218–238 (LGVVGFGGLVSSVAGLITVVY). The tract at residues 218–238 (LGVVGFGGLVSSVAGLITVVY) is required for homodimerization, interaction with PEX11G, and peroxisomal localization. Residues 239-246 (PQLKLKAR) lie on the Cytoplasmic side of the membrane.

It belongs to the peroxin-11 family. As to quaternary structure, homodimer. Heterodimer with PEX11G. Probably interacts with COPB2 and COPA. Interacts with PEX19. Interacts with FIS1. As to expression, expressed at high levels in kidney, liver, lung, brain, and testis and at low levels in heart, spleen and skeletal muscle.

The protein resides in the peroxisome membrane. May be involved in peroxisomal proliferation and may regulate peroxisomes division. May mediate binding of coatomer proteins to the peroxisomal membrane. Promotes membrane protrusion and elongation on the peroxisomal surface. This is Peroxisomal membrane protein 11A (Pex11a) from Rattus norvegicus (Rat).